The following is a 255-amino-acid chain: 5'-nucleotidase SurE (255 aa).

4 residues coordinate a divalent metal cation: Asp8, Asp9, Ser40, and Asn93.

It belongs to the SurE nucleotidase family. The cofactor is a divalent metal cation.

It localises to the cytoplasm. It carries out the reaction a ribonucleoside 5'-phosphate + H2O = a ribonucleoside + phosphate. Nucleotidase that shows phosphatase activity on nucleoside 5'-monophosphates. The chain is 5'-nucleotidase SurE from Azorhizobium caulinodans (strain ATCC 43989 / DSM 5975 / JCM 20966 / LMG 6465 / NBRC 14845 / NCIMB 13405 / ORS 571).